Here is a 125-residue protein sequence, read N- to C-terminus: Transmembrane protein 14EP (125 aa).

Transmembrane regions (helical) follow at residues 9 to 29 (VPLY…GISG) and 81 to 101 (ILTL…LIVS).

The protein belongs to the TMEM14 family.

Its subcellular location is the membrane. The sequence is that of Transmembrane protein 14EP (TMEM14EP) from Homo sapiens (Human).